An 803-amino-acid chain; its full sequence is MALEEVVRYLGPHNEIPLTLTRDSETGHFLLKHFLPILQQYHDTGNINETNPDSFPTDEERNKLLAHYGIAVNTDDRGELWIELEKCLQLLNMLNLFGLFQDAFEFEEPETDQDEEDPSHSKLPENKTKSENSKDNISSKRINNLQDMSLDSDAHRELGSPLKKLKIDTSVIDAESDSTPNTARGKPNDDINKGPSGDNENNGTDDNDRTAGPIITFTHDLTSDFLSSPLKIMKALPSPVVNDNEQKMKLEAFLQRLLFPEIQEMPTSLNNDSSNRNSEGGSSNQQQQHVSFDSLLQEVNDAFPNTQLNLNIPVDEHGNTPLHWLTSIANLELVKHLVKHGSNRLYGDNMGESCLVKAVKSVNNYDSGTFEALLDYLYPCLILEDSMNRTILHHIIITSGMTGCSAAAKYYLDILMGWIVKKQNRPIQSGTNEKESKPNDKNGERKDSILENLDLKWIIANMLNAQDSNGDTCLNIAARLGNISIVDALLDYGADPFIANKSGLRPVDFGAGTSKLQNTNGGDENSKMVSKGDYDGQKNGKAKKIRSQLLKNPPETTSLINDVQNLLNSISKDYENETVQYNEKLEKLHKELNEQREELANSREQLANVKQLKDEYSLMQEQLTNLKAGIEEEEESFREESKKLGIIADESSGIDWDSSEYDADEPFKVEFLSDFLEDKLQKNYEGDISKLLEAESKEQIMEQIRNQLPAEKIQSMLPPTVLLKARINAYKRNDKHLTNVLDTISTKQSELENKFRRVLSLCLKIDENKVDNMLDGLLQAISSEDPQDIDTDEMQDFLKKHAS.

The span at 108–117 (EPETDQDEED) shows a compositional bias: acidic residues. The tract at residues 108–150 (EPETDQDEEDPSHSKLPENKTKSENSKDNISSKRINNLQDMSL) is disordered. Over residues 118–138 (PSHSKLPENKTKSENSKDNIS) the composition is skewed to basic and acidic residues. The segment covering 139–149 (SKRINNLQDMS) has biased composition (polar residues). Ser149 is subject to Phosphoserine. Ser160 is modified (phosphoserine; by CDC28). 2 disordered regions span residues 169 to 212 (TSVI…RTAG) and 266 to 288 (PTSL…QQQQ). Phosphoserine is present on Ser176. Phosphothreonine occurs at positions 179 and 182. Residues 270-288 (NNDSSNRNSEGGSSNQQQQ) show a composition bias toward low complexity. ANK repeat units follow at residues 318-346 (GNTP…NRLY), 347-383 (GDNM…CLIL), 384-469 (EDSM…QDSN), 470-498 (GDTC…DPFI), and 499-514 (ANKS…AGTS). The disordered stretch occupies residues 512-540 (GTSKLQNTNGGDENSKMVSKGDYDGQKNG). Polar residues predominate over residues 514 to 523 (SKLQNTNGGD). Basic and acidic residues predominate over residues 524 to 538 (ENSKMVSKGDYDGQK). Ser547 is modified (phosphoserine).

Component of the transcription complex MCB-binding factor (MBF) composed of SWI6 and MBP1. Component of the transcription complex SCB-binding factor (SBF) composed of SWI6 and SWI4. Interacts with MSA1 and STB1. Post-translationally, phosphorylated by CDC28 and dephosphorylated by CDC14.

The protein localises to the nucleus. Its subcellular location is the cytoplasm. Its function is as follows. Part of a complex involved in cell-cycle-dependent transcription. SWI4 and SWI6 are required for formation of the cell-cycle box factor-DNA complex. The repeated element in the upstream region of HO (5'-CACGAAAA-3') is called the cell cycle box (CCB). This is Regulatory protein SWI6 (SWI6) from Saccharomyces cerevisiae (strain ATCC 204508 / S288c) (Baker's yeast).